A 24-amino-acid polypeptide reads, in one-letter code: Hyaluronidase (24 aa).

Expressed by the venom gland.

The protein localises to the secreted. It catalyses the reaction Random hydrolysis of (1-&gt;4)-linkages between N-acetyl-beta-D-glucosamine and D-glucuronate residues in hyaluronate.. Its function is as follows. Possesses high activity against hyaluronan in vitro. The protein is Hyaluronidase of Tityus stigmurus (Brazilian scorpion).